The primary structure comprises 318 residues: tRNA dimethylallyltransferase (318 aa).

28–35 (GPTGAGKS) is an ATP binding site. 30–35 (TGAGKS) contacts substrate. Positions 53 to 56 (DSMQ) are interaction with substrate tRNA.

The protein belongs to the IPP transferase family. Monomer. It depends on Mg(2+) as a cofactor.

It catalyses the reaction adenosine(37) in tRNA + dimethylallyl diphosphate = N(6)-dimethylallyladenosine(37) in tRNA + diphosphate. In terms of biological role, catalyzes the transfer of a dimethylallyl group onto the adenine at position 37 in tRNAs that read codons beginning with uridine, leading to the formation of N6-(dimethylallyl)adenosine (i(6)A). This Parafrankia sp. (strain EAN1pec) protein is tRNA dimethylallyltransferase.